The sequence spans 416 residues: Lipase A (416 aa).

The N-terminal stretch at 1–32 (MRLAPQKPLLLSTVLHLLLSIWMLGFASLAGA) is a signal peptide. 2 cysteine pairs are disulfide-bonded: Cys-67–Cys-391 and Cys-177–Cys-180. Asn-179 carries N-linked (GlcNAc...) asparagine glycosylation. The active-site Nucleophile is Ser-219. Residues Asp-287 and His-381 each act as charge relay system in the active site.

The protein belongs to the AB hydrolase superfamily. Lipase family. In terms of processing, glycosylated.

The protein resides in the secreted. The catalysed reaction is Deacetylation of xylans and xylo-oligosaccharides.. It carries out the reaction a triacylglycerol + H2O = a diacylglycerol + a fatty acid + H(+). Lipolytic enzyme that possesses both lipase and acetylxylan esterase activity. Active towards p-nitrophenol esters of various carbon chain length with preference for medium-chain fatty acids (C-8). Also highly active on the acetylated compounds xylose tetra-acetate and oat spelt xylan. The polypeptide is Lipase A (Sodiomyces alcalophilus (Acremonium alcalophilum)).